The chain runs to 296 residues: Probable lipid kinase YegS-like (296 aa).

In terms of domain architecture, DAGKc spans 1–130 (MPHTLLILNG…IDLAQVNGEH (130 aa)). ATP contacts are provided by residues Thr-37, 63 to 69 (GDGTINE), and Thr-92. Mg(2+) contacts are provided by Leu-212, Asp-215, and Leu-217. Catalysis depends on Glu-268, which acts as the Proton acceptor.

This sequence belongs to the diacylglycerol/lipid kinase family. YegS lipid kinase subfamily. Mg(2+) serves as cofactor. The cofactor is Ca(2+).

It is found in the cytoplasm. Functionally, probably phosphorylates lipids; the in vivo substrate is unknown. The sequence is that of Probable lipid kinase YegS-like from Yersinia pseudotuberculosis serotype I (strain IP32953).